Consider the following 705-residue polypeptide: Double-strand break repair protein MRE11 (705 aa).

Mn(2+) contacts are provided by D15, H17, D55, and N122. H123 serves as the catalytic Proton donor. Positions 220, 248, and 250 each coordinate Mn(2+). A compositionally biased stretch (basic and acidic residues) spans 505–514 (RSLRSKEDSR). The disordered stretch occupies residues 505–705 (RSLRSKEDSR…TRNYGAVRRR (201 aa)). 2 stretches are compositionally biased toward polar residues: residues 515–538 (FTSSSQNLDTGGRSVTAQSNLNSF) and 589–605 (SMKQTTLNFSQSRSSAA). Residues 641 to 663 (GRKRAAPRGGRGRGRGATAKRGR) are compositionally biased toward basic residues.

It belongs to the MRE11/RAD32 family. As to quaternary structure, component of the MRN complex composed of two heterodimers RAD50/MRE11 associated with a single NBS1. Requires Mn(2+) as cofactor.

Its subcellular location is the nucleus. The protein localises to the chromosome. In terms of biological role, core component of the MRN complex, which plays a central role in double-strand break (DSB) repair, DNA recombination, maintenance of telomere integrity and meiosis. The MRN complex is involved in the repair of DNA double-strand breaks (DSBs) via homologous recombination (HR), an error-free mechanism which primarily occurs during S and G2 phases. The complex (1) mediates the end resection of damaged DNA, which generates proper single-stranded DNA, a key initial steps in HR, and is (2) required for the recruitment of other repair factors and efficient activation of ATM and ATR upon DNA damage. Within the MRN complex, MRE11 possesses both single-strand endonuclease activity and double-strand-specific 3'-5' exonuclease activity. MRE11 first endonucleolytically cleaves the 5' strand at DNA DSB ends to prevent non-homologous end joining (NHEJ) and licence HR. It then generates a single-stranded DNA gap via 3' to 5' exonucleolytic degradation, which is required for single-strand invasion and recombination. This is Double-strand break repair protein MRE11 from Oryza sativa subsp. indica (Rice).